Here is a 284-residue protein sequence, read N- to C-terminus: MSMLPSFGFTQEQVACVCEVLQQGGNLERLGRFLWSLPACDHLHKNESVLKAKAVVAFHRGNFRELYKILESHQFSPHNHPKLQQLWLKAHYVEAEKLRGRPLGAVGKYRVRRKFPLPRTIWDGEETSYCFKEKSRGVLREWYAHNPYPSPREKRELAEATGLTTTQVSNWFKNRRQRDRAAEAKERENTENNNSSSNKQNQLSPLEGGKPLMSSSEEEFSPPQSPDQNSVLLLQSNMGHARSSNYSLPGLTASQPSHGLQAHQHQLQDSLLGPLTSSLVDLGS.

The segment at residues 124-183 is a DNA-binding region (homeobox); that stretch reads GEETSYCFKEKSRGVLREWYAHNPYPSPREKRELAEATGLTTTQVSNWFKNRRQRDRAAE. A disordered region spans residues 168–284; sequence VSNWFKNRRQ…LTSSLVDLGS (117 aa). Over residues 179 to 190 the composition is skewed to basic and acidic residues; it reads DRAAEAKERENT. The segment covering 227–284 has biased composition (polar residues); sequence DQNSVLLLQSNMGHARSSNYSLPGLTASQPSHGLQAHQHQLQDSLLGPLTSSLVDLGS.

It belongs to the SIX/Sine oculis homeobox family. In terms of assembly, interacts with DACH1. Interacts with EYA1. Interacts with EYA2. Interacts with CDH1. Interacts with TBX18. Interacts with CEBPA. Interacts with CEBPB. Interacts with EBF2. Post-translationally, phosphorylated during interphase; becomes hyperphosphorylated during mitosis. Hyperphosphorylation impairs binding to promoter elements. Ubiquitinated by the anaphase promoting complex (APC), leading to its proteasomal degradation. Expressed in phalangeal tendons and in skeletal muscle and in head and body mesenchyme.

It is found in the nucleus. Its subcellular location is the cytoplasm. Its function is as follows. Transcription factor that is involved in the regulation of cell proliferation, apoptosis and embryonic development. Plays an important role in the development of several organs, including kidney, muscle and inner ear. Depending on context, functions as a transcriptional repressor or activator. Lacks an activation domain, and requires interaction with EYA family members for transcription activation. Mediates nuclear translocation of EYA1 and EYA2. Binds the 5'-TCA[AG][AG]TTNC-3' motif present in the MEF3 element in the MYOG promoter and CIDEA enhancer. Regulates the expression of numerous genes, including MYC, CCNA1, CCND1 and EZR. Acts as an activator of the IGFBP5 promoter, probably coactivated by EYA2. Repression of precursor cell proliferation in myoblasts is switched to activation through recruitment of EYA3 to the SIX1-DACH1 complex. During myogenesis, seems to act together with EYA2 and DACH2. Regulates the expression of CCNA1. Promotes brown adipocyte differentiation. This chain is Homeobox protein SIX1 (Six1), found in Mus musculus (Mouse).